We begin with the raw amino-acid sequence, 100 residues long: Integration host factor subunit beta (100 aa).

Belongs to the bacterial histone-like protein family. As to quaternary structure, heterodimer of an alpha and a beta chain.

Functionally, this protein is one of the two subunits of integration host factor, a specific DNA-binding protein that functions in genetic recombination as well as in transcriptional and translational control. This Agrobacterium fabrum (strain C58 / ATCC 33970) (Agrobacterium tumefaciens (strain C58)) protein is Integration host factor subunit beta.